Consider the following 272-residue polypeptide: Phosphatidylglycerol--prolipoprotein diacylglyceryl transferase (272 aa).

The next 7 membrane-spanning stretches (helical) occupy residues 17–37, 55–75, 90–110, 125–145, 174–194, 202–222, and 230–250; these read LQVH…WGLA, LVFY…VLFY, VWTG…AMLF, FVAP…FIGG, PSQI…LWWF, MAVS…MEFF, and GFIL…MLLI. Arg138 is a binding site for a 1,2-diacyl-sn-glycero-3-phospho-(1'-sn-glycerol).

The protein belongs to the Lgt family.

Its subcellular location is the cell inner membrane. It catalyses the reaction L-cysteinyl-[prolipoprotein] + a 1,2-diacyl-sn-glycero-3-phospho-(1'-sn-glycerol) = an S-1,2-diacyl-sn-glyceryl-L-cysteinyl-[prolipoprotein] + sn-glycerol 1-phosphate + H(+). It functions in the pathway protein modification; lipoprotein biosynthesis (diacylglyceryl transfer). In terms of biological role, catalyzes the transfer of the diacylglyceryl group from phosphatidylglycerol to the sulfhydryl group of the N-terminal cysteine of a prolipoprotein, the first step in the formation of mature lipoproteins. This chain is Phosphatidylglycerol--prolipoprotein diacylglyceryl transferase, found in Acinetobacter baumannii (strain AB307-0294).